The primary structure comprises 430 residues: MNTTIKEAKQYIGQEVTIGAWLTNKRSSGKIAFLQLRDGTGFIQGVVAKAEVDEEIFQKAKEITQESSLYVTGVISEDNRSDIGYEMQVKSIEVISEAHDYPITPKNHGTEFLMDHRHLWLRSKKQHAVMKIRNEIIRATYEFFNDNGFTKIDPPILTASAPEGTSELFHTKYFDQDAFLSQSGQLYMEAAAMAHGRVFSFGPTFRAEKSKTRRHLIEFWMIEPEMAFCEHAQSLEVQEQYVTHVVKSVLNHCKLELKALDRDTSKLEKVTTPFPRITYADAVIFLKEQGFDDIEWGEDFGAPHETAIANHYDLPVFITNYPTKIKPFYMQPNPENEDTVLCADLIAPEGYGEIIGGSERINDLELLEERLSQFELDAESYSYYLDLRRYGSVPHSGFGLGLERTVAWLSGVEHVRETAPFPRLLNRLYP.

Belongs to the class-II aminoacyl-tRNA synthetase family. As to quaternary structure, homodimer.

The protein localises to the cytoplasm. The catalysed reaction is tRNA(Asn) + L-asparagine + ATP = L-asparaginyl-tRNA(Asn) + AMP + diphosphate + H(+). The protein is Asparagine--tRNA ligase of Staphylococcus saprophyticus subsp. saprophyticus (strain ATCC 15305 / DSM 20229 / NCIMB 8711 / NCTC 7292 / S-41).